We begin with the raw amino-acid sequence, 615 residues long: Crinkler effector protein 15 (615 aa).

Residues 1–17 (MVKLVCAIVGVAGSAFP) form the signal peptide. The interval 18-54 (VDIDASQLVGDLKKAIKAENAMTFTGDAKDLQLFLAK) is LQLFLAK domain. The interval 55-136 (QPVDDESGKE…NMELPSSEQI (82 aa)) is DWL domain. The short motif at 137-143 (HVLVVVP) is the HVLVXXP motif element. The N-linked (GlcNAc...) asparagine glycan is linked to N531.

This sequence belongs to the Crinkler effector family.

The protein localises to the secreted. It is found in the host nucleus. Functionally, secreted effector that elicits necrosis in host plants, a characteristic of plant innate immunity. The polypeptide is Crinkler effector protein 15 (Phytophthora infestans (Potato late blight agent)).